We begin with the raw amino-acid sequence, 68 residues long: Large ribosomal subunit protein uL30 (68 aa).

This sequence belongs to the universal ribosomal protein uL30 family. In terms of assembly, part of the 50S ribosomal subunit.

The sequence is that of Large ribosomal subunit protein uL30 from Paenarthrobacter aurescens (strain TC1).